The following is a 134-amino-acid chain: Profilin-3 (134 aa).

Cysteine 13 and cysteine 118 are oxidised to a cystine. The Involved in PIP2 interaction motif lies at 84 to 100 (AVIRGKKGSGGITIKKT). Threonine 114 is modified (phosphothreonine).

The protein belongs to the profilin family. Occurs in many kinds of cells as a complex with monomeric actin in a 1:1 ratio. Phosphorylated by MAP kinases.

It is found in the cytoplasm. Its subcellular location is the cytoskeleton. Functionally, binds to actin and affects the structure of the cytoskeleton. At high concentrations, profilin prevents the polymerization of actin, whereas it enhances it at low concentrations. This is Profilin-3 from Olea europaea (Common olive).